The following is a 116-amino-acid chain: Ribonuclease T (116 aa).

An Exonuclease domain is found at 18-99 (KRAILVGHNS…YDTEKTAELF (82 aa)). Residue H86 is the Proton donor/acceptor of the active site.

It belongs to the RNase T family. In terms of assembly, homodimer.

Functionally, trims short 3' overhangs of a variety of RNA species, leaving a one or two nucleotide 3' overhang. Responsible for the end-turnover of tRNA: specifically removes the terminal AMP residue from uncharged tRNA (tRNA-C-C-A). Also appears to be involved in tRNA biosynthesis. The polypeptide is Ribonuclease T (Azotobacter vinelandii).